Here is a 314-residue protein sequence, read N- to C-terminus: Acetyl-coenzyme A carboxylase carboxyl transferase subunit beta (314 aa).

In terms of domain architecture, CoA carboxyltransferase N-terminal spans 37–307; sequence LWQKCPACDT…MSLPSIDSEA (271 aa). The Zn(2+) site is built by cysteine 41, cysteine 44, cysteine 60, and cysteine 63. Residues 41–63 form a C4-type zinc finger; the sequence is CPACDTLTYTKDLQQNWQVCPSC.

This sequence belongs to the AccD/PCCB family. As to quaternary structure, acetyl-CoA carboxylase is a heterohexamer composed of biotin carboxyl carrier protein (AccB), biotin carboxylase (AccC) and two subunits each of ACCase subunit alpha (AccA) and ACCase subunit beta (AccD). Zn(2+) is required as a cofactor.

The protein resides in the cytoplasm. It carries out the reaction N(6)-carboxybiotinyl-L-lysyl-[protein] + acetyl-CoA = N(6)-biotinyl-L-lysyl-[protein] + malonyl-CoA. The protein operates within lipid metabolism; malonyl-CoA biosynthesis; malonyl-CoA from acetyl-CoA: step 1/1. Functionally, component of the acetyl coenzyme A carboxylase (ACC) complex. Biotin carboxylase (BC) catalyzes the carboxylation of biotin on its carrier protein (BCCP) and then the CO(2) group is transferred by the transcarboxylase to acetyl-CoA to form malonyl-CoA. In Synechococcus sp. (strain JA-2-3B'a(2-13)) (Cyanobacteria bacterium Yellowstone B-Prime), this protein is Acetyl-coenzyme A carboxylase carboxyl transferase subunit beta.